Consider the following 550-residue polypeptide: Zorya protein ZorA (550 aa).

Transmembrane regions (helical) follow at residues 16–36 (TLIT…AWWC), 52–72 (LMGA…LLNF), and 92–112 (FITS…DAFF).

This sequence belongs to the MotA family.

The protein localises to the cell inner membrane. Its function is as follows. Component of antiviral defense system Zorya type II, composed of ZorA, ZorB and ZorE. Expression of Zorya type II in E.coli (strain MG1655) confers resistance to phages SECphi7 and T7. While most T7 infected Zorya-containing cells undergo abortive infection, a minority produce viable phage progeny. These eventually accumulate to a high multiplicity of infection, leading to culture collapse by 170 minutes after initial infection. ZorA and ZorB probably assemble in the cell inner membrane and exert their effect there. The sequence is that of Zorya protein ZorA from Escherichia coli (strain ATCC 8739 / DSM 1576 / NBRC 3972 / NCIMB 8545 / WDCM 00012 / Crooks).